The primary structure comprises 189 residues: Elongation factor P (189 aa).

Belongs to the elongation factor P family.

It localises to the cytoplasm. Its pathway is protein biosynthesis; polypeptide chain elongation. Involved in peptide bond synthesis. Stimulates efficient translation and peptide-bond synthesis on native or reconstituted 70S ribosomes in vitro. Probably functions indirectly by altering the affinity of the ribosome for aminoacyl-tRNA, thus increasing their reactivity as acceptors for peptidyl transferase. This chain is Elongation factor P, found in Rhizobium johnstonii (strain DSM 114642 / LMG 32736 / 3841) (Rhizobium leguminosarum bv. viciae).